Consider the following 227-residue polypeptide: Acyl-protein thioesterase 1 (227 aa).

Residues S119, D173, and H207 each act as charge relay system in the active site.

It belongs to the AB hydrolase superfamily. AB hydrolase 2 family.

It localises to the cytoplasm. Its subcellular location is the nucleus. It carries out the reaction S-hexadecanoyl-L-cysteinyl-[protein] + H2O = L-cysteinyl-[protein] + hexadecanoate + H(+). Its function is as follows. Hydrolyzes fatty acids from S-acylated cysteine residues in proteins with a strong preference for palmitoylated G-alpha proteins over other acyl substrates. Mediates the deacylation of G-alpha proteins such as GPA1 in vivo, but has weak or no activity toward palmitoylated Ras proteins. Has weak lysophospholipase activity in vitro; however such activity may not exist in vivo. The sequence is that of Acyl-protein thioesterase 1 from Yarrowia lipolytica (strain CLIB 122 / E 150) (Yeast).